The following is a 608-amino-acid chain: Fatty acid amide hydrolase (608 aa).

Catalysis depends on charge relay system residues K206 and S282. Residue 303-306 (GGGS) participates in substrate binding. The active-site Acyl-ester intermediate is S306.

It belongs to the amidase family. In terms of assembly, forms homodimers.

It is found in the endoplasmic reticulum membrane. The protein resides in the cell membrane. The enzyme catalyses N-(9Z,12Z-octadecadienoyl)-ethanolamine + H2O = ethanolamine + (9Z,12Z)-octadecadienoate. It carries out the reaction N-hexadecanoylethanolamine + H2O = ethanolamine + hexadecanoate. The catalysed reaction is N-dodecanoylethanolamine + H2O = dodecanoate + ethanolamine. Its activity is regulated as follows. Inhibited by methyl arachidonyl fluorophosphonate (MAFP). Catalyzes the hydrolysis of bioactive endogenous fatty acid amides to their corresponding acids. The hydrolysis of endogenous amidated lipids terminates their participation as lipid mediators in various signaling systems. Converts a wide range of N-acylethanolamines (NAEs) to their corresponding free fatty acids and ethanolamine. The sequence is that of Fatty acid amide hydrolase from Oryza sativa subsp. japonica (Rice).